Reading from the N-terminus, the 314-residue chain is Lipoyl synthase (314 aa).

Residues C55, C60, C66, C81, C85, C88, and S292 each coordinate [4Fe-4S] cluster. The 215-residue stretch at 67 to 281 folds into the Radical SAM core domain; the sequence is WEDREATFLI…SAYAEGLGFA (215 aa).

Belongs to the radical SAM superfamily. Lipoyl synthase family. [4Fe-4S] cluster is required as a cofactor.

The protein localises to the cytoplasm. The enzyme catalyses [[Fe-S] cluster scaffold protein carrying a second [4Fe-4S](2+) cluster] + N(6)-octanoyl-L-lysyl-[protein] + 2 oxidized [2Fe-2S]-[ferredoxin] + 2 S-adenosyl-L-methionine + 4 H(+) = [[Fe-S] cluster scaffold protein] + N(6)-[(R)-dihydrolipoyl]-L-lysyl-[protein] + 4 Fe(3+) + 2 hydrogen sulfide + 2 5'-deoxyadenosine + 2 L-methionine + 2 reduced [2Fe-2S]-[ferredoxin]. The protein operates within protein modification; protein lipoylation via endogenous pathway; protein N(6)-(lipoyl)lysine from octanoyl-[acyl-carrier-protein]: step 2/2. In terms of biological role, catalyzes the radical-mediated insertion of two sulfur atoms into the C-6 and C-8 positions of the octanoyl moiety bound to the lipoyl domains of lipoate-dependent enzymes, thereby converting the octanoylated domains into lipoylated derivatives. This chain is Lipoyl synthase, found in Mycolicibacterium smegmatis (strain ATCC 700084 / mc(2)155) (Mycobacterium smegmatis).